The primary structure comprises 294 residues: Ankyrin repeat and SOCS box protein 9 (294 aa).

Position 1 is an N-acetylmethionine (M1). 6 ANK repeats span residues 35–64, 68–97, 101–130, 133–162, 166–195, and 198–227; these read SDWS…AVNI, DHVS…QVNG, DWHT…SVQP, DLAS…NIDH, HLGT…DVNQ, and GQDS…DTQA. S51 is modified (phosphoserine). In terms of domain architecture, SOCS box spans 240 to 294; it reads PPESPLAQLFLEREGPPSLMQLCRLRIRKCFGIQQHHKITKLVLPEDLKQFLLHL.

Belongs to the ankyrin SOCS box (ASB) family. Substrate-recognition component of the ECS(ASB9) complex, composed of ASB9, CUL5, ELOB, ELOC and RNF7/RBX2. As to expression, predominantly expressed in testis, kidney, and liver.

The protein localises to the mitochondrion. The protein operates within protein modification; protein ubiquitination. Functionally, substrate-recognition component of a cullin-5-RING E3 ubiquitin-protein ligase complex (ECS complex, also named CRL5 complex), which mediates the ubiquitination and subsequent proteasomal degradation of target proteins. The ECS(ASB9) complex catalyzes ubiquitination of creatine kinases CKB and CKMT1A. Does not interact with the Elongin BC complex, likely to be a negative regulator of isoform 1. This chain is Ankyrin repeat and SOCS box protein 9, found in Homo sapiens (Human).